The primary structure comprises 119 residues: Large ribosomal subunit protein uL18 (119 aa).

The protein belongs to the universal ribosomal protein uL18 family. As to quaternary structure, part of the 50S ribosomal subunit; part of the 5S rRNA/L5/L18/L25 subcomplex. Contacts the 5S and 23S rRNAs.

Functionally, this is one of the proteins that bind and probably mediate the attachment of the 5S RNA into the large ribosomal subunit, where it forms part of the central protuberance. The sequence is that of Large ribosomal subunit protein uL18 from Micrococcus luteus (Micrococcus lysodeikticus).